The chain runs to 174 residues: Protein GrpE (174 aa).

It belongs to the GrpE family. In terms of assembly, homodimer.

It is found in the cytoplasm. In terms of biological role, participates actively in the response to hyperosmotic and heat shock by preventing the aggregation of stress-denatured proteins, in association with DnaK and GrpE. It is the nucleotide exchange factor for DnaK and may function as a thermosensor. Unfolded proteins bind initially to DnaJ; upon interaction with the DnaJ-bound protein, DnaK hydrolyzes its bound ATP, resulting in the formation of a stable complex. GrpE releases ADP from DnaK; ATP binding to DnaK triggers the release of the substrate protein, thus completing the reaction cycle. Several rounds of ATP-dependent interactions between DnaJ, DnaK and GrpE are required for fully efficient folding. This chain is Protein GrpE, found in Methanothermobacter thermautotrophicus (strain ATCC 29096 / DSM 1053 / JCM 10044 / NBRC 100330 / Delta H) (Methanobacterium thermoautotrophicum).